We begin with the raw amino-acid sequence, 267 residues long: Putative transcription factor Ovo-like 1 (267 aa).

4 C2H2-type zinc fingers span residues 118–140 (FTCH…MKCH), 146–168 (HLCT…VRTH), 174–197 (YKCS…KKIH), and 213–236 (YVCE…KERH).

As to expression, expressed in skin, testis, kidney and weakly in lung. Not detected in heart, brain, spleen, liver and skeletal muscle.

Its subcellular location is the nucleus. Putative transcription factor. Involved in hair formation and spermatogenesis. May function in the differentiation and/or maintenance of the urogenital system. The chain is Putative transcription factor Ovo-like 1 (Ovol1) from Mus musculus (Mouse).